The primary structure comprises 370 residues: UDP-N-acetylglucosamine--N-acetylmuramyl-(pentapeptide) pyrophosphoryl-undecaprenol N-acetylglucosamine transferase (370 aa).

UDP-N-acetyl-alpha-D-glucosamine contacts are provided by residues 14–16 (TGG), Asn125, Arg168, Ser196, and Gln297.

This sequence belongs to the glycosyltransferase 28 family. MurG subfamily.

The protein resides in the cell inner membrane. The catalysed reaction is di-trans,octa-cis-undecaprenyl diphospho-N-acetyl-alpha-D-muramoyl-L-alanyl-D-glutamyl-meso-2,6-diaminopimeloyl-D-alanyl-D-alanine + UDP-N-acetyl-alpha-D-glucosamine = di-trans,octa-cis-undecaprenyl diphospho-[N-acetyl-alpha-D-glucosaminyl-(1-&gt;4)]-N-acetyl-alpha-D-muramoyl-L-alanyl-D-glutamyl-meso-2,6-diaminopimeloyl-D-alanyl-D-alanine + UDP + H(+). It functions in the pathway cell wall biogenesis; peptidoglycan biosynthesis. Its function is as follows. Cell wall formation. Catalyzes the transfer of a GlcNAc subunit on undecaprenyl-pyrophosphoryl-MurNAc-pentapeptide (lipid intermediate I) to form undecaprenyl-pyrophosphoryl-MurNAc-(pentapeptide)GlcNAc (lipid intermediate II). This Nitrobacter hamburgensis (strain DSM 10229 / NCIMB 13809 / X14) protein is UDP-N-acetylglucosamine--N-acetylmuramyl-(pentapeptide) pyrophosphoryl-undecaprenol N-acetylglucosamine transferase.